A 302-amino-acid polypeptide reads, in one-letter code: Aliphatic sulfonates import ATP-binding protein SsuB (302 aa).

Low complexity predominate over residues 30–57 (PATADAQHTADAQHTADAQHTADAQHTA). The interval 30–65 (PATADAQHTADAQHTADAQHTADAQHTAETAETRGA) is disordered. The ABC transporter domain occupies 70–284 (IRIRGLRRTF…RRTDPAFDRL (215 aa)). ATP is bound at residue 102–109 (GRSGSGKS).

This sequence belongs to the ABC transporter superfamily. Aliphatic sulfonates importer (TC 3.A.1.17.2) family. As to quaternary structure, the complex is composed of two ATP-binding proteins (SsuB), two transmembrane proteins (SsuC) and a solute-binding protein (SsuA).

The protein localises to the cell membrane. It catalyses the reaction ATP + H2O + aliphatic sulfonate-[sulfonate-binding protein]Side 1 = ADP + phosphate + aliphatic sulfonateSide 2 + [sulfonate-binding protein]Side 1.. In terms of biological role, part of the ABC transporter complex SsuABC involved in aliphatic sulfonates import. Responsible for energy coupling to the transport system. The polypeptide is Aliphatic sulfonates import ATP-binding protein SsuB (Frankia casuarinae (strain DSM 45818 / CECT 9043 / HFP020203 / CcI3)).